The sequence spans 145 residues: U20-hexatoxin-Hi1a (145 aa).

An N-terminal signal peptide occupies residues 1–16 (MYQFLIIVILAAFVNG). Thyroglobulin type-1 domains are found at residues 20 to 73 (KTEC…GQPM) and 82 to 145 (ACEC…RLEC). Intrachain disulfides connect Cys-23–Cys-45, Cys-56–Cys-63, Cys-85–Cys-106, Cys-117–Cys-124, and Cys-126–Cys-145.

Expressed by the venom gland.

It localises to the secreted. Functionally, cysteine proteinase inhibitor. The sequence is that of U20-hexatoxin-Hi1a from Hadronyche infensa (Fraser island funnel-web spider).